Consider the following 131-residue polypeptide: Large ribosomal subunit protein bL17 (131 aa).

The protein belongs to the bacterial ribosomal protein bL17 family. As to quaternary structure, part of the 50S ribosomal subunit. Contacts protein L32.

The chain is Large ribosomal subunit protein bL17 from Shewanella violacea (strain JCM 10179 / CIP 106290 / LMG 19151 / DSS12).